The sequence spans 280 residues: Phosphate import ATP-binding protein PstB (280 aa).

Residues 34 to 275 (IEVKNLNFFY…PARKETEDYI (242 aa)) form the ABC transporter domain. Position 66–73 (66–73 (GPSGCGKS)) interacts with ATP.

This sequence belongs to the ABC transporter superfamily. Phosphate importer (TC 3.A.1.7) family. In terms of assembly, the complex is composed of two ATP-binding proteins (PstB), two transmembrane proteins (PstC and PstA) and a solute-binding protein (PstS).

It localises to the cell inner membrane. It carries out the reaction phosphate(out) + ATP + H2O = ADP + 2 phosphate(in) + H(+). In terms of biological role, part of the ABC transporter complex PstSACB involved in phosphate import. Responsible for energy coupling to the transport system. In Burkholderia mallei (strain ATCC 23344), this protein is Phosphate import ATP-binding protein PstB.